The chain runs to 200 residues: Thymidine kinase (200 aa).

ATP is bound by residues 9-16 (STMNAGKS) and 88-91 (DEAH). Glutamate 89 functions as the Proton acceptor in the catalytic mechanism. Zn(2+)-binding residues include cysteine 146, cysteine 148, cysteine 183, and histidine 186.

Belongs to the thymidine kinase family. In terms of assembly, homotetramer.

Its subcellular location is the cytoplasm. The catalysed reaction is thymidine + ATP = dTMP + ADP + H(+). The polypeptide is Thymidine kinase (Rhizobium etli (strain ATCC 51251 / DSM 11541 / JCM 21823 / NBRC 15573 / CFN 42)).